The following is a 176-amino-acid chain: MKVLLCLVCSFYIIVSSITTMTTGTPSMPAINRQTLYLAAYSSKLFSWNVGCVKTRHLSQEGDWVTRSLIYVFTFDKKPWETKADAFKVKWEPYSPLLRVQASDYVKYNLRAKPEYFIRTYDDDFLLLSDVKESRSPCSLWVTLKYVERIPETINRTFYANCPDPVTVPFDERCYP.

The signal sequence occupies residues 1–24 (MKVLLCLVCSFYIIVSSITTMTTG). 2 disulfides stabilise this stretch: cysteine 52–cysteine 174 and cysteine 138–cysteine 162. Residue asparagine 155 is glycosylated (N-linked (GlcNAc...) asparagine).

This sequence belongs to the calycin superfamily. Lipocalin family. As to quaternary structure, homodimer; non-disulfide-linked. Each monomer accommodates one molecule of cholesterol in a pocket. Expressed in salivary glands.

The protein localises to the secreted. In terms of biological role, salivary tick protein that modulates host immune response. This protein blocks dendritic cell (DC) differentiation from monocytes. In addition, it inhibits up-regulation of costimulatory molecules and pro-inflammatory cytokines in response to stimuli and promotes up-regulation of co-inhibitory molecules and the anti-inflammatory cytokine interleukin-10. It has a pocket to accomodate cholesterol, which may have immune-modulatory roles, either directly or through interactions with the host gut microbiota. This is Japanin-like-RS from Rhipicephalus sanguineus (Brown dog tick).